Here is a 304-residue protein sequence, read N- to C-terminus: Acetyl-coenzyme A carboxylase carboxyl transferase subunit beta (304 aa).

A CoA carboxyltransferase N-terminal domain is found at E52 to I304. Residues C56, C59, C75, and C78 each contribute to the Zn(2+) site. The C4-type zinc finger occupies C56–C78.

The protein belongs to the AccD/PCCB family. Acetyl-CoA carboxylase is a heterohexamer composed of biotin carboxyl carrier protein (AccB), biotin carboxylase (AccC) and two subunits each of ACCase subunit alpha (AccA) and ACCase subunit beta (AccD). It depends on Zn(2+) as a cofactor.

Its subcellular location is the cytoplasm. It catalyses the reaction N(6)-carboxybiotinyl-L-lysyl-[protein] + acetyl-CoA = N(6)-biotinyl-L-lysyl-[protein] + malonyl-CoA. Its pathway is lipid metabolism; malonyl-CoA biosynthesis; malonyl-CoA from acetyl-CoA: step 1/1. Its function is as follows. Component of the acetyl coenzyme A carboxylase (ACC) complex. Biotin carboxylase (BC) catalyzes the carboxylation of biotin on its carrier protein (BCCP) and then the CO(2) group is transferred by the transcarboxylase to acetyl-CoA to form malonyl-CoA. The polypeptide is Acetyl-coenzyme A carboxylase carboxyl transferase subunit beta (Fusobacterium nucleatum subsp. nucleatum (strain ATCC 25586 / DSM 15643 / BCRC 10681 / CIP 101130 / JCM 8532 / KCTC 2640 / LMG 13131 / VPI 4355)).